We begin with the raw amino-acid sequence, 292 residues long: Pyridoxal 5'-phosphate synthase subunit PdxS (292 aa).

Aspartate 22 serves as a coordination point for D-ribose 5-phosphate. Lysine 79 (schiff-base intermediate with D-ribose 5-phosphate) is an active-site residue. Residue glycine 151 coordinates D-ribose 5-phosphate. Arginine 163 serves as a coordination point for D-glyceraldehyde 3-phosphate. D-ribose 5-phosphate is bound by residues glycine 212 and 233-234 (GS).

The protein belongs to the PdxS/SNZ family. In the presence of PdxT, forms a dodecamer of heterodimers.

The enzyme catalyses aldehydo-D-ribose 5-phosphate + D-glyceraldehyde 3-phosphate + L-glutamine = pyridoxal 5'-phosphate + L-glutamate + phosphate + 3 H2O + H(+). It functions in the pathway cofactor biosynthesis; pyridoxal 5'-phosphate biosynthesis. Functionally, catalyzes the formation of pyridoxal 5'-phosphate from ribose 5-phosphate (RBP), glyceraldehyde 3-phosphate (G3P) and ammonia. The ammonia is provided by the PdxT subunit. Can also use ribulose 5-phosphate and dihydroxyacetone phosphate as substrates, resulting from enzyme-catalyzed isomerization of RBP and G3P, respectively. This Thermoanaerobacter pseudethanolicus (strain ATCC 33223 / 39E) (Clostridium thermohydrosulfuricum) protein is Pyridoxal 5'-phosphate synthase subunit PdxS.